The primary structure comprises 271 residues: 3'-phosphoadenosine 5'-phosphate phosphatase (271 aa).

The Mg(2+) site is built by Glu73, Asp91, Leu93, Asp94, and Asp216. Residue Glu73 coordinates substrate. Residues 93 to 96 (LDGT) and Asp216 each bind substrate.

This sequence belongs to the inositol monophosphatase superfamily. Homodimer. Mg(2+) is required as a cofactor.

It catalyses the reaction adenosine 3',5'-bisphosphate + H2O = AMP + phosphate. The enzyme catalyses beta-D-fructose 1,6-bisphosphate + H2O = beta-D-fructose 6-phosphate + phosphate. The catalysed reaction is a myo-inositol phosphate + H2O = myo-inositol + phosphate. Its pathway is sulfur metabolism; sulfate assimilation. Phosphatase with a broad specificity. Its primary physiological function is to dephosphorylate 3'-phosphoadenosine 5'-phosphate (PAP) and 3'-phosphoadenosine 5'-phosphosulfate (PAPS). Thus, plays a role in mycobacterial sulfur metabolism, since it can serve as a key regulator of the sulfate assimilation pathway by controlling the pools of PAP and PAPS in the cell. To a lesser extent, is also able to hydrolyze inositol 1-phosphate (I-1-P), fructose 1,6-bisphosphate (FBP) (to fructose 6-phosphate (F-6-P)) and AMP in vitro, but this might not be significant in vivo. In Mycobacterium leprae (strain TN), this protein is 3'-phosphoadenosine 5'-phosphate phosphatase (cysQ).